The primary structure comprises 433 residues: Glutamate-1-semialdehyde 2,1-aminomutase (433 aa).

K273 bears the N6-(pyridoxal phosphate)lysine mark.

Belongs to the class-III pyridoxal-phosphate-dependent aminotransferase family. HemL subfamily. As to quaternary structure, homodimer. It depends on pyridoxal 5'-phosphate as a cofactor.

Its subcellular location is the cytoplasm. It catalyses the reaction (S)-4-amino-5-oxopentanoate = 5-aminolevulinate. The protein operates within porphyrin-containing compound metabolism; protoporphyrin-IX biosynthesis; 5-aminolevulinate from L-glutamyl-tRNA(Glu): step 2/2. It functions in the pathway porphyrin-containing compound metabolism; chlorophyll biosynthesis. This Synechocystis sp. (strain ATCC 27184 / PCC 6803 / Kazusa) protein is Glutamate-1-semialdehyde 2,1-aminomutase (hemL).